Consider the following 309-residue polypeptide: Glutaminase (309 aa).

Positions 64, 114, 160, 167, 191, 243, and 261 each coordinate substrate.

It belongs to the glutaminase family. Homotetramer.

The catalysed reaction is L-glutamine + H2O = L-glutamate + NH4(+). The protein is Glutaminase of Agrobacterium fabrum (strain C58 / ATCC 33970) (Agrobacterium tumefaciens (strain C58)).